The following is a 546-amino-acid chain: MFS-type transporter GME11371 (546 aa).

The next 7 membrane-spanning stretches (helical) occupy residues 39–59 (LTYLFLALILCMLLAVIDLTI), 77–96 (IGWYASVFFMTVASSQSSWG), 107–127 (MFLLAMGIFELGNVICGAAPT), 137–157 (ITGIGAAGVIAGCFTVAAFAV), 167–187 (GGLAATYGVGSSIGPIIGGVL), 195–215 (WCFYINLPIGGFAAIVLFLFF), and 240–260 (FPGFFCCIAAVTCLLLALLWG). Asparagine 267 carries N-linked (GlcNAc...) asparagine glycosylation. The next 7 helical transmembrane spans lie at 270-290 (DVIGTLVGFFLFTALFAVVEW), 307-327 (VVLFGTIGGFFAGGAQFVLVY), 349-369 (LPYIIGSTITTIVAGTTISAT), 370-390 (GYFTPLIVGGGALWTVSAGLI), 402-422 (WIGYQALAGLAVGLCYQPPIL), 433-453 (VAATSAILLFFQTMGGAFMVS), and 509-529 (ISFAIIIALTGASTVAGIFMP).

The protein belongs to the major facilitator superfamily.

The protein localises to the cell membrane. The protein operates within secondary metabolite biosynthesis. Its function is as follows. MFS-type transporter; part of the gene cluster that mediates the biosynthesis of dibenzodioxocinones such as pestalotiollide B, a novel class of inhibitors against cholesterol ester transfer protein (CEPT). essential for dibenzodioxocinones biosynthesis and may be involved in the secretion of the cluster products. In Pestalotiopsis microspora, this protein is MFS-type transporter GME11371.